A 445-amino-acid polypeptide reads, in one-letter code: Putative H/ACA ribonucleoprotein complex subunit 4 (445 aa).

The tract at residues 1–32 is disordered; it reads MGKKDKRSKLEGDELAEAQQKGSFQLPSSNET. A compositionally biased stretch (polar residues) spans 20–32; it reads QKGSFQLPSSNET. Asp113 (nucleophile) is an active-site residue. One can recognise a PUA domain in the interval 284–359; it reads HKRVVVKDSC…IVAKSKRVIM (76 aa). Positions 407 to 445 are disordered; it reads TDKVKKEQEDKEDEEEEEAPKKKSKKAAKKEVSSSSDSE.

This sequence belongs to the pseudouridine synthase TruB family. As to quaternary structure, component of the small nucleolar ribonucleoprotein particle containing H/ACA-type snoRNAs (H/ACA snoRNPs).

The protein resides in the nucleus. It is found in the nucleolus. It carries out the reaction a uridine in RNA = a pseudouridine in RNA. Functionally, plays a central role in ribosomal RNA processing. Probable catalytic subunit of H/ACA small nucleolar ribonucleoprotein (H/ACA snoRNP) complex, which catalyzes pseudouridylation of rRNA. This involves the isomerization of uridine such that the ribose is subsequently attached to C5, instead of the normal N1. Pseudouridine ('psi') residues may serve to stabilize the conformation of rRNAs. This chain is Putative H/ACA ribonucleoprotein complex subunit 4, found in Caenorhabditis briggsae.